A 342-amino-acid polypeptide reads, in one-letter code: Zinc transporter ZIP11 (342 aa).

7 consecutive transmembrane segments (helical) span residues 12-32 (LLGT…VFIF), 44-64 (LGFA…APAV), 72-92 (GFGA…AAFV), 194-214 (IALL…AVGV), 263-285 (FWYG…FAVV), 290-307 (ILPY…YVVM), and 322-342 (LASW…VGLG).

It belongs to the ZIP transporter (TC 2.A.5) family. In terms of tissue distribution, highly expressed in the testes and portions of the digestive system including the stomach, ileum and cecum. In contrast, expressed at very low levels in liver, duodenum, jejunum, and colon.

The protein localises to the cell membrane. The protein resides in the nucleus. It localises to the cytoplasm. It is found in the golgi apparatus. The catalysed reaction is Zn(2+)(in) = Zn(2+)(out). The enzyme catalyses Cu(2+)(in) = Cu(2+)(out). In terms of biological role, zinc importer that regulates cytosolic zinc concentration either via zinc influx from the extracellular compartment or efflux from intracellular organelles such as Golgi apparatus. May transport copper ions as well. The transport mechanism remains to be elucidated. This is Zinc transporter ZIP11 (Slc39a11) from Mus musculus (Mouse).